Consider the following 501-residue polypeptide: Cytochrome P450 monooxygenase janQ (501 aa).

A helical membrane pass occupies residues 1-16 (MVLGLLAFIWLMRAWR). N132 carries an N-linked (GlcNAc...) asparagine glycan. C439 provides a ligand contact to heme.

The protein belongs to the cytochrome P450 family. Requires heme as cofactor.

It is found in the membrane. Its pathway is secondary metabolite biosynthesis. Functionally, cytochrome P450 monooxygenase; part of the gene cluster that mediates the biosynthesis of the indole diterpenes janthitremanes such as shearinine K or shearinine A. The geranylgeranyl diphosphate (GGPP) synthase janG catalyzes the first step in janthitremane biosynthesis via conversion of farnesyl pyrophosphate and isopentyl pyrophosphate into geranylgeranyl pyrophosphate (GGPP). Condensation of indole-3-glycerol phosphate with GGPP by the prenyl transferase janC then forms 3-geranylgeranylindole (3-GGI). Epoxidation by the FAD-dependent monooxygenase janM leads to a epoxidized-GGI that is substrate of the terpene cyclase janB for cyclization to yield paspaline. Paspaline is subsequently converted to 13-desoxypaspaline by the cytochrome P450 monooxygenase janP, via beta-PC-M6 in a series of alpha-face oxidations. The cytochrome P450 monooxygenase janQ is proposed to carry out sequential beta-face oxidation steps at C-7 and C-13 of 13-desoxypaspaline to form paspalicine and paspalinine respectively. The indole diterpene prenyltransferase janD may then convert paspalinine into shearinine K which is substrate of janO and/or additional enzymes for oxidation and cyclization to generate shearinine A. The chain is Cytochrome P450 monooxygenase janQ from Penicillium janthinellum (Penicillium vitale).